Reading from the N-terminus, the 139-residue chain is Putative nickel-responsive regulator (139 aa).

4 residues coordinate Ni(2+): His79, His90, His92, and Cys98.

It belongs to the transcriptional regulatory CopG/NikR family. Ni(2+) serves as cofactor.

Its function is as follows. Transcriptional regulator. The sequence is that of Putative nickel-responsive regulator from Anaeromyxobacter dehalogenans (strain 2CP-C).